The sequence spans 308 residues: MTPRKKLEGLVAATVTPMTPDGRINLSVIHQYVDYLVSEQNVKNIFVNGTTGEGLSLSIQERKQLAEEWMCQGKGKLDHVIIHVGALSLLESQELARHAAAIGASGIAVIAPSFFKPTNKDELLGFLQKVASEAPTVPFYYYHIPAMTGVKIRVEELLDGIREQIPTFQGVKFSDTDLLDLAQCINKKEREQFVFLYGVDEQLLSALAIGANGAVGSTYNYLGRKTNLMLQAFAKPDLALARKYQFLTGEFLSFVIKLGFGVAQTKAVMTSISGIPMGPPRLPLVGASEEFIAKAKAKLESIVWPDGD.

Residues threonine 50 and threonine 51 each contribute to the aceneuramate site. Tyrosine 142 acts as the Proton donor in catalysis. The Schiff-base intermediate with substrate role is filled by lysine 172. Residues serine 174, glycine 198, aspartate 200, glutamate 201, and serine 217 each contribute to the aceneuramate site.

This sequence belongs to the DapA family. NanA subfamily. In terms of assembly, homotetramer.

It localises to the cytoplasm. The catalysed reaction is aceneuramate = aldehydo-N-acetyl-D-mannosamine + pyruvate. It participates in amino-sugar metabolism; N-acetylneuraminate degradation. Its function is as follows. Catalyzes the cleavage of N-acetylneuraminic acid (sialic acid) to form pyruvate and N-acetylmannosamine via a Schiff base intermediate. It prevents sialic acids from being recycled and returning to the cell surface. Involved in the N-glycolylneuraminic acid (Neu5Gc) degradation pathway. In Gallus gallus (Chicken), this protein is N-acetylneuraminate lyase.